The sequence spans 275 residues: 4-diphosphocytidyl-2-C-methyl-D-erythritol kinase (275 aa).

Lys14 is a catalytic residue. Position 98–108 (Pro98–Ser108) interacts with ATP. Asp140 is an active-site residue.

It belongs to the GHMP kinase family. IspE subfamily.

It carries out the reaction 4-CDP-2-C-methyl-D-erythritol + ATP = 4-CDP-2-C-methyl-D-erythritol 2-phosphate + ADP + H(+). It participates in isoprenoid biosynthesis; isopentenyl diphosphate biosynthesis via DXP pathway; isopentenyl diphosphate from 1-deoxy-D-xylulose 5-phosphate: step 3/6. In terms of biological role, catalyzes the phosphorylation of the position 2 hydroxy group of 4-diphosphocytidyl-2C-methyl-D-erythritol. This Francisella tularensis subsp. tularensis (strain FSC 198) protein is 4-diphosphocytidyl-2-C-methyl-D-erythritol kinase.